A 387-amino-acid chain; its full sequence is Protein phosphatase 2C 50 (387 aa).

One can recognise a PPM-type phosphatase domain in the interval 60–377 (VWGCASTRGR…DNITVIVVDL (318 aa)). 2 residues coordinate Mn(2+): Asp118 and Gly119. The Modulates binding affinity to PYR/PYL/RCAR abscisic acid intracellular receptors motif lies at 264 to 268 (VSGIL). Mn(2+)-binding residues include Asp306 and Asp368.

This sequence belongs to the PP2C family. As to quaternary structure, interacts with PYL3, PYL5, PYL9 and PYL10. Binding to PYL3, PYL5, PYL9 and PYL10 is dependent on the presence of abscisic acid (ABA). Interacts with SAPK10. Requires Mg(2+) as cofactor. It depends on Mn(2+) as a cofactor.

The catalysed reaction is O-phospho-L-seryl-[protein] + H2O = L-seryl-[protein] + phosphate. The enzyme catalyses O-phospho-L-threonyl-[protein] + H2O = L-threonyl-[protein] + phosphate. Its function is as follows. Protein phosphatase involved in abscisic acid (ABA) signaling. Together with PYL3 and SAPK10, may form an ABA signaling module involved in stress response. This Oryza sativa subsp. japonica (Rice) protein is Protein phosphatase 2C 50.